The chain runs to 419 residues: Histidine--tRNA ligase (419 aa).

The protein belongs to the class-II aminoacyl-tRNA synthetase family. Homodimer.

The protein localises to the cytoplasm. The catalysed reaction is tRNA(His) + L-histidine + ATP = L-histidyl-tRNA(His) + AMP + diphosphate + H(+). The polypeptide is Histidine--tRNA ligase (Trichlorobacter lovleyi (strain ATCC BAA-1151 / DSM 17278 / SZ) (Geobacter lovleyi)).